The following is a 352-amino-acid chain: Lipoyl synthase (352 aa).

A disordered region spans residues 1–21; sequence MTSVDTPTPHGGTPAPAPATA. Residues Cys-71, Cys-76, Cys-82, Cys-97, Cys-101, Cys-104, and Ser-308 each contribute to the [4Fe-4S] cluster site. Residues 83–297 enclose the Radical SAM core domain; the sequence is WEDREATFLI…SRVAEEIGFA (215 aa).

Belongs to the radical SAM superfamily. Lipoyl synthase family. [4Fe-4S] cluster serves as cofactor.

The protein localises to the cytoplasm. It carries out the reaction [[Fe-S] cluster scaffold protein carrying a second [4Fe-4S](2+) cluster] + N(6)-octanoyl-L-lysyl-[protein] + 2 oxidized [2Fe-2S]-[ferredoxin] + 2 S-adenosyl-L-methionine + 4 H(+) = [[Fe-S] cluster scaffold protein] + N(6)-[(R)-dihydrolipoyl]-L-lysyl-[protein] + 4 Fe(3+) + 2 hydrogen sulfide + 2 5'-deoxyadenosine + 2 L-methionine + 2 reduced [2Fe-2S]-[ferredoxin]. The protein operates within protein modification; protein lipoylation via endogenous pathway; protein N(6)-(lipoyl)lysine from octanoyl-[acyl-carrier-protein]: step 2/2. Its function is as follows. Catalyzes the radical-mediated insertion of two sulfur atoms into the C-6 and C-8 positions of the octanoyl moiety bound to the lipoyl domains of lipoate-dependent enzymes, thereby converting the octanoylated domains into lipoylated derivatives. In Nocardia farcinica (strain IFM 10152), this protein is Lipoyl synthase.